We begin with the raw amino-acid sequence, 372 residues long: Alpha-L-fucosidase 3 (372 aa).

Residues 1–23 (MNPILSSLFALSLLSSLSPSTHA) form the signal peptide. Catalysis depends on Ser37, which acts as the Nucleophile. Asn96, Asn114, Asn139, and Asn182 each carry an N-linked (GlcNAc...) asparagine glycan. Catalysis depends on residues Asp345 and His348.

The protein belongs to the 'GDSL' lipolytic enzyme family. High expression in younger leaves and in the apical region of the inflorescence stem.

The protein resides in the secreted. Its subcellular location is the extracellular space. The protein localises to the apoplast. The catalysed reaction is an alpha-L-fucoside + H2O = L-fucose + an alcohol. Functionally, hydrolyzes alpha-1,2-linked fucose. Also active on fucosylated xyloglucan oligosaccharides. The polypeptide is Alpha-L-fucosidase 3 (FXG1) (Arabidopsis thaliana (Mouse-ear cress)).